Reading from the N-terminus, the 444-residue chain is Trigger factor (444 aa).

Residues 160-245 form the PPIase FKBP-type domain; the sequence is DMQVTFDFEG…VKQVEKPKLP (86 aa).

It belongs to the FKBP-type PPIase family. Tig subfamily.

It is found in the cytoplasm. The enzyme catalyses [protein]-peptidylproline (omega=180) = [protein]-peptidylproline (omega=0). In terms of biological role, involved in protein export. Acts as a chaperone by maintaining the newly synthesized protein in an open conformation. Functions as a peptidyl-prolyl cis-trans isomerase. The protein is Trigger factor of Acinetobacter baylyi (strain ATCC 33305 / BD413 / ADP1).